The primary structure comprises 506 residues: Zinc finger and SCAN domain containing protein 4C (506 aa).

The tract at residues 1–24 is disordered; sequence MASQQAPAKDLQTNNLEFTPTDSS. In terms of domain architecture, SCAN box spans 37–119; sequence SAQLNFSPSN…RFMESLTDEC (83 aa). 4 C2H2-type zinc fingers span residues 395 to 417, 424 to 446, 452 to 474, and 480 to 503; these read YKCE…QRTH, LLCV…EIIH, FKCS…EMIH, and YVCS…RNYH.

As to expression, embryonic stem (ES) cell-specific. Expressed in only 5% of ES cells at a given time, but nearly all ES cells express it at least once during 9 passages.

The protein localises to the nucleus. The protein resides in the chromosome. It localises to the telomere. Its function is as follows. Embryonic stem (ES) cell-specific transcription factor required to regulate ES cell pluripotency. Binds telomeres and plays a key role in genomic stability in ES cells by regulating telomere elongation. Acts as an activator of spontaneous telomere sister chromatid exchange (T-SCE) and telomere elongation in undifferentiated ES cells. This chain is Zinc finger and SCAN domain containing protein 4C (Zscan4c), found in Mus musculus (Mouse).